The primary structure comprises 3391 residues: Genome polyprotein (3391 aa).

The interaction with host EXOC1 stretch occupies residues 1 to 15; the sequence is MNNQRKKARSTPFNM. Over 1–101 the chain is Cytoplasmic; the sequence is MNNQRKKARS…LNILNRRRRT (101 aa). A hydrophobic; homodimerization of capsid protein C region spans residues 37–72; that stretch reads MLQGRGPLKLFMALVAFLRFLTIPPTAGILKRWGTI. Residues 101 to 114 constitute a propeptide, ER anchor for the capsid protein C, removed in mature form by serine protease NS3; the sequence is TAGVIIMLIPTAMA. Residues 102 to 119 traverse the membrane as a helical segment; sequence AGVIIMLIPTAMAFHLTT. Residues 120–241 lie on the Extracellular side of the membrane; it reads RNGEPHMIVG…KHVQRIETWI (122 aa). Asn-183 carries N-linked (GlcNAc...) asparagine; by host glycosylation. The chain crosses the membrane as a helical span at residues 242 to 259; the sequence is LRHPGFTIMAAILAYTIG. Residues 260 to 265 are Cytoplasmic-facing; sequence TTHFQR. A helical membrane pass occupies residues 266-280; the sequence is ALIFILLTAVAPSMT. Residues 281-725 lie on the Extracellular side of the membrane; the sequence is MRCIGISNRD…LHQVFGAIYG (445 aa). 4 disulfides stabilise this stretch: Cys-283/Cys-310, Cys-340/Cys-401, Cys-354/Cys-385, and Cys-372/Cys-396. A glycan (N-linked (GlcNAc...) asparagine; by host) is linked at Asn-347. The segment at 378–391 is fusion peptide; that stretch reads DRGWGNGCGLFGKG. A glycan (N-linked (GlcNAc...) asparagine; by host) is linked at Asn-433. 2 cysteine pairs are disulfide-bonded: Cys-465/Cys-565 and Cys-582/Cys-613. The chain crosses the membrane as a helical span at residues 726–746; that stretch reads AAFSGVSWTMKILIGVIITWI. At 747 to 752 the chain is on the cytoplasmic side; it reads GMNSRS. A helical transmembrane segment spans residues 753–773; that stretch reads TSLSVSLVLVGVVTLYLGAMV. Residues 774–1195 lie on the Extracellular side of the membrane; sequence QADSGCVVSW…MVGATMTDDI (422 aa). 6 disulfide bridges follow: Cys-779–Cys-790, Cys-830–Cys-918, Cys-954–Cys-998, Cys-1055–Cys-1104, Cys-1066–Cys-1088, and Cys-1087–Cys-1091. N-linked (GlcNAc...) asparagine; by host glycans are attached at residues Asn-905 and Asn-982. An N-linked (GlcNAc...) asparagine; by host glycan is attached at Asn-1134. A helical transmembrane segment spans residues 1196–1220; it reads GMGVTYLALLAAFKVRPTFAAGLLL. Residues 1221-1226 lie on the Cytoplasmic side of the membrane; the sequence is RKLTSK. A helical membrane pass occupies residues 1227–1245; the sequence is ELMMATIGIALLSQSTIPE. Residues 1246 to 1269 lie on the Lumenal side of the membrane; that stretch reads TILELTDALALGMMVLKIVRNMEK. A helical membrane pass occupies residues 1270 to 1290; it reads YQLAVTIMAILCVPNAVILQN. Position 1291 (Ala-1291) is a topological domain, cytoplasmic. The helical transmembrane segment at 1292 to 1310 threads the bilayer; that stretch reads WKVSCTILAAVSVSPLLLT. Topologically, residues 1311-1317 are lumenal; the sequence is SSQQKAD. The helical transmembrane segment at 1318 to 1338 threads the bilayer; the sequence is WIPLALTIKGLNPTAIFLTTL. Topologically, residues 1339–1346 are cytoplasmic; that stretch reads SRTSKKRS. A helical transmembrane segment spans residues 1347 to 1367; it reads WPLNEAIMAVGMVSILASSLL. At 1368–1370 the chain is on the lumenal side; sequence KND. A helical membrane pass occupies residues 1371–1391; the sequence is IPMTGPLVAGGLLTVCYVLTG. Over 1392 to 1447 the chain is Cytoplasmic; it reads RSADLELERAADVKWEDQAEISGSSPILSITISEDGSMSIKNEEEEQTLTILIRTG. Residues 1398–1437 form an interacts with and activates NS3 protease region; the sequence is LERAADVKWEDQAEISGSSPILSITISEDGSMSIKNEEEE. The helical intramembrane region spans 1448–1468; that stretch reads LLVISGVFPVSIPITAAAWYL. Residues 1469–2147 are Cytoplasmic-facing; that stretch reads WEVKKQRAGV…LSELPETLET (679 aa). A Peptidase S7 domain is found at 1476–1653; it reads AGVLWDVPSP…EKSIEDNPEI (178 aa). Catalysis depends on charge relay system; for serine protease NS3 activity residues His-1526, Asp-1550, and Ser-1610. The region spanning 1655-1811 is the Helicase ATP-binding domain; that stretch reads DDIFRKKRLT…QSNAPIMDEE (157 aa). An important for RNA-binding region spans residues 1659-1662; sequence RKKR. 1668–1675 contacts ATP; it reads LHPGAGKT. Residues 1759-1762 carry the DEAH box motif; sequence DEAH. Residues 1821–1988 form the Helicase C-terminal domain; it reads SGHEWVTDFK…IIPSMFEPER (168 aa). N6-acetyllysine; by host is present on Lys-1863. A helical transmembrane segment spans residues 2148-2168; sequence LLLLTLLATVTGGIFLFLMSG. Residues 2169–2170 lie on the Lumenal side of the membrane; sequence KG. Residues 2171–2191 constitute an intramembrane region (helical); the sequence is IGKMTLGMCCIITASILLWYA. Gln-2192 is a topological domain (lumenal). The helical transmembrane segment at 2193–2213 threads the bilayer; that stretch reads IQPHWIAASIILEFFLIVLLI. The Cytoplasmic portion of the chain corresponds to 2214 to 2228; that stretch reads PEPEKQRTPQDNQLT. Residues 2229-2249 form a helical membrane-spanning segment; it reads YVVIAILTVVAATMANEMGFL. The Lumenal segment spans residues 2250 to 2274; that stretch reads EKTKKDLGLGSITTQESESNILDID. Residues 2275–2295 constitute an intramembrane region (helical); sequence LRPASAWTLYAVATTFVTPML. Residues 2296-2316 lie on the Lumenal side of the membrane; it reads RHSIENSSVNVSLTAIANQAT. N-linked (GlcNAc...) asparagine; by host glycosylation is found at Asn-2301 and Asn-2305. Positions 2317 to 2337 form an intramembrane region, helical; sequence VLMGLGKGWPLSKIHIGVPLL. Residues 2338–2347 lie on the Lumenal side of the membrane; the sequence is AIGCYSQVNP. Residues 2348–2368 form a helical membrane-spanning segment; the sequence is ITLTAALLLLVAHYAIIGPGL. At 2369–2413 the chain is on the cytoplasmic side; it reads QAKATREAQKRAAAGIMKNPTVDGITVIDLDPIPYDPKFEKQLGQ. Residues 2414–2434 form a helical membrane-spanning segment; sequence VMLLILCVTQVLMMRTTWALC. At 2435–2459 the chain is on the lumenal side; sequence EALTLATGPISTLWEGNPGRFWNTT. Asn-2457 is a glycosylation site (N-linked (GlcNAc...) asparagine; by host). A helical membrane pass occupies residues 2460–2480; sequence IAVSMANIFRGSYLAGAGLLF. The Cytoplasmic portion of the chain corresponds to 2481-3391; sequence SIMKNTTNTR…REEEEAGVLW (911 aa). The mRNA cap 0-1 NS5-type MT domain maps to 2493 to 2755; that stretch reads TGNIGETLGE…DVDLGSGTRN (263 aa). Ser-2547 serves as a coordination point for S-adenosyl-L-methionine. The residue at position 2547 (Ser-2547) is a Phosphoserine. Lys-2552 acts as the For 2'-O-MTase activity in catalysis. The SUMO-interacting motif motif lies at 2568–2571; it reads VVDL. The S-adenosyl-L-methionine site is built by Gly-2577, Trp-2578, Thr-2595, Lys-2596, Asp-2622, and Val-2623. Asp-2637 (for 2'-O-MTase activity) is an active-site residue. Position 2638 (Ile-2638) interacts with S-adenosyl-L-methionine. Active-site for 2'-O-MTase activity residues include Lys-2672 and Glu-2708. Residue Tyr-2710 participates in S-adenosyl-L-methionine binding. Glu-2929, His-2933, Cys-2938, and Cys-2941 together coordinate Zn(2+). The 150-residue stretch at 3020-3169 folds into the RdRp catalytic domain; it reads AMYADDTAGW…PLDDRFASAL (150 aa). Residues His-3203, Cys-3219, and Cys-3338 each contribute to the Zn(2+) site.

The protein in the N-terminal section; belongs to the class I-like SAM-binding methyltransferase superfamily. mRNA cap 0-1 NS5-type methyltransferase family. In terms of assembly, homodimer. Interacts (via N-terminus) with host EXOC1 (via C-terminus); this interaction results in EXOC1 degradation through the proteasome degradation pathway. Forms heterodimers with envelope protein E in the endoplasmic reticulum and Golgi. As to quaternary structure, homodimer; in the endoplasmic reticulum and Golgi. Interacts with protein prM. Interacts with non-structural protein 1. In terms of assembly, homodimer; Homohexamer when secreted. Interacts with envelope protein E. Interacts with host PRKAA1. Interacts (via N-terminus) with serine protease NS3. As to quaternary structure, forms a heterodimer with serine protease NS3. May form homooligomers. In terms of assembly, forms a heterodimer with NS2B. Interacts with NS4B. Interacts with unphosphorylated RNA-directed RNA polymerase NS5; this interaction stimulates RNA-directed RNA polymerase NS5 guanylyltransferase activity. Interacts with host SHFL. Interacts with host MAVS; this interaction inhibits the synthesis of IFN-beta. Interacts with host SHFL. Interacts with host AUP1; the interaction occurs in the presence of Dengue virus NS4B and induces lipophagy which facilitates production of virus progeny particles. May interact with host SRPRA and SEC61G. As to quaternary structure, interacts with serine protease NS3. In terms of assembly, homodimer. Interacts with host STAT2; this interaction inhibits the phosphorylation of the latter, and, when all viral proteins are present (polyprotein), targets STAT2 for degradation. Interacts with serine protease NS3. Interacts with host PAF1 complex; the interaction may prevent the recruitment of the PAF1 complex to interferon-responsive genes, and thus reduces the immune response. Post-translationally, specific enzymatic cleavages in vivo yield mature proteins. Cleavages in the lumen of endoplasmic reticulum are performed by host signal peptidase, whereas cleavages in the cytoplasmic side are performed by serine protease NS3. Signal cleavage at the 2K-4B site requires a prior NS3 protease-mediated cleavage at the 4A-2K site. Cleaved in post-Golgi vesicles by a host furin, releasing the mature small envelope protein M, and peptide pr. This cleavage is incomplete as up to 30% of viral particles still carry uncleaved prM. In terms of processing, N-glycosylated. Post-translationally, N-glycosylated. The excreted form is glycosylated and this is required for efficient secretion of the protein from infected cells. Acetylated by host KAT5. Acetylation modulates NS3 RNA-binding and unwinding activities and plays an important positive role for viral replication. In terms of processing, sumoylation of RNA-directed RNA polymerase NS5 increases NS5 protein stability allowing proper viral RNA replication. Post-translationally, phosphorylated on serines residues. This phosphorylation may trigger NS5 nuclear localization.

The protein resides in the virion. Its subcellular location is the host nucleus. It localises to the host cytoplasm. The protein localises to the host perinuclear region. It is found in the secreted. The protein resides in the virion membrane. Its subcellular location is the host endoplasmic reticulum membrane. It localises to the host mitochondrion. The enzyme catalyses Selective hydrolysis of -Xaa-Xaa-|-Yaa- bonds in which each of the Xaa can be either Arg or Lys and Yaa can be either Ser or Ala.. The catalysed reaction is RNA(n) + a ribonucleoside 5'-triphosphate = RNA(n+1) + diphosphate. It catalyses the reaction a ribonucleoside 5'-triphosphate + H2O = a ribonucleoside 5'-diphosphate + phosphate + H(+). It carries out the reaction ATP + H2O = ADP + phosphate + H(+). The enzyme catalyses a 5'-end (5'-triphosphoguanosine)-ribonucleoside in mRNA + S-adenosyl-L-methionine = a 5'-end (N(7)-methyl 5'-triphosphoguanosine)-ribonucleoside in mRNA + S-adenosyl-L-homocysteine. The catalysed reaction is a 5'-end (N(7)-methyl 5'-triphosphoguanosine)-ribonucleoside in mRNA + S-adenosyl-L-methionine = a 5'-end (N(7)-methyl 5'-triphosphoguanosine)-(2'-O-methyl-ribonucleoside) in mRNA + S-adenosyl-L-homocysteine + H(+). Functionally, plays a role in virus budding by binding to the cell membrane and gathering the viral RNA into a nucleocapsid that forms the core of a mature virus particle. During virus entry, may induce genome penetration into the host cytoplasm after hemifusion induced by the surface proteins. Can migrate to the cell nucleus where it modulates host functions. Overcomes the anti-viral effects of host EXOC1 by sequestering and degrading the latter through the proteasome degradation pathway. Inhibits RNA silencing by interfering with host Dicer. In terms of biological role, prevents premature fusion activity of envelope proteins in trans-Golgi by binding to envelope protein E at pH6.0. After virion release in extracellular space, gets dissociated from E dimers. Its function is as follows. Acts as a chaperone for envelope protein E during intracellular virion assembly by masking and inactivating envelope protein E fusion peptide. prM is the only viral peptide matured by host furin in the trans-Golgi network probably to avoid catastrophic activation of the viral fusion activity in acidic Golgi compartment prior to virion release. prM-E cleavage is inefficient, and many virions are only partially matured. These uncleaved prM would play a role in immune evasion. Functionally, may play a role in virus budding. Exerts cytotoxic effects by activating a mitochondrial apoptotic pathway through M ectodomain. May display a viroporin activity. Binds to host cell surface receptor and mediates fusion between viral and cellular membranes. Envelope protein is synthesized in the endoplasmic reticulum in the form of heterodimer with protein prM. They play a role in virion budding in the ER, and the newly formed immature particle is covered with 60 spikes composed of heterodimer between precursor prM and envelope protein E. The virion is transported to the Golgi apparatus where the low pH causes dissociation of PrM-E heterodimers and formation of E homodimers. prM-E cleavage is inefficient, and many virions are only partially matured. These uncleaved prM would play a role in immune evasion. In terms of biological role, involved in immune evasion, pathogenesis and viral replication. Once cleaved off the polyprotein, is targeted to three destinations: the viral replication cycle, the plasma membrane and the extracellular compartment. Essential for viral replication. Required for formation of the replication complex and recruitment of other non-structural proteins to the ER-derived membrane structures. Excreted as a hexameric lipoparticle that plays a role against host immune response. Antagonizing the complement function. Binds to the host macrophages and dendritic cells. Inhibits signal transduction originating from Toll-like receptor 3 (TLR3). Its function is as follows. Involved in immune evasion, pathogenesis and viral replication. Once cleaved off the polyprotein, is targeted to three destinations: the viral replication cycle, the plasma membrane and the extracellular compartment. Essential for viral replication. Required for formation of the replication complex and recruitment of other non-structural proteins to the ER-derived membrane structures. Excreted as a hexameric lipoparticle that plays a role against host immune response. Antagonizing the complement function. Binds to the host macrophages and dendritic cells. Inhibits signal transduction originating from Toll-like receptor 3 (TLR3). Mediates complement activation, which may contribute to the pathogenesis of the vascular leakage that occurs in severe dengue disease. Activates autophagy through the AMPK/ERK/mTOR signaling pathway. Mechanistically, acts as the assembly platform for STK11-AMPK interactions and promotes STK11-AMPK interactions. In turn, promotes phosphorylation of the AMPK kinase structural domain and activates AMPK, thereby positively regulating the AMPK/ERK/mTOR signaling pathway and inducing autophagy. Functionally, component of the viral RNA replication complex that functions in virion assembly and antagonizes the host immune response. Required cofactor for the serine protease function of NS3. May have membrane-destabilizing activity and form viroporins. In terms of biological role, displays three enzymatic activities: serine protease, NTPase and RNA helicase. NS3 serine protease, in association with NS2B, performs its autocleavage and cleaves the polyprotein at dibasic sites in the cytoplasm: C-prM, NS2A-NS2B, NS2B-NS3, NS3-NS4A, NS4A-2K and NS4B-NS5. NS3 RNA helicase binds RNA and unwinds dsRNA in the 3' to 5' direction. Its function is as follows. Regulates the ATPase activity of the NS3 helicase activity. NS4A allows NS3 helicase to conserve energy during unwinding. Plays a role in the inhibition of the host innate immune response. Interacts with host MAVS and thereby prevents the interaction between RIGI and MAVS. In turn, IFN-beta production is impaired. Interacts with host AUP1 which mediates induction of lipophagy in host cells and facilitates production of virus progeny particles. Functionally, functions as a signal peptide for NS4B and is required for the interferon antagonism activity of the latter. Induces the formation of ER-derived membrane vesicles where the viral replication takes place. Inhibits interferon (IFN)-induced host STAT1 phosphorylation and nuclear translocation, thereby preventing the establishment of cellular antiviral state by blocking the IFN-alpha/beta pathway. In terms of biological role, replicates the viral (+) and (-) RNA genome, and performs the capping of genomes in the cytoplasm. NS5 methylates viral RNA cap at guanine N-7 and ribose 2'-O positions. Besides its role in RNA genome replication, also prevents the establishment of cellular antiviral state by blocking the interferon-alpha/beta (IFN-alpha/beta) signaling pathway. Inhibits host TYK2 and STAT2 phosphorylation, thereby preventing activation of JAK-STAT signaling pathway. May reduce immune responses by preventing the recruitment of the host PAF1 complex to interferon-responsive genes. The polypeptide is Genome polyprotein (Dengue virus type 2 (strain Jamaica/1409/1983) (DENV-2)).